Here is a 497-residue protein sequence, read N- to C-terminus: Homeotic protein empty spiracles (497 aa).

3 disordered regions span residues 34-117, 161-262, and 441-497; these read NDVS…HLSP, SPLQ…MMMP, and NRRT…DASH. Over residues 35–50 the composition is skewed to polar residues; the sequence is DVSTAGGNSTPDLSGP. Residues 51–68 show a composition bias toward pro residues; that stretch reads QSPPPGERNVPGSPPQTP. The segment covering 96–117 has biased composition (low complexity); it reads PHAQQQQQQHLQAPHPHPHLSP. Positions 161–176 are enriched in polar residues; the sequence is SPLQTRLSPETEQPQM. Low complexity-rich tracts occupy residues 208–239 and 248–262; these read PKSV…QQQQ and PAMM…MMMP. Positions 391–450 form a DNA-binding region, homeobox; that stretch reads PKRIRTAFSPSQLLKLEHAFESNQYVVGAERKALAQNLNLSETQVKVWFQNRRTKHKRMQ. Residues 470-497 are compositionally biased toward acidic residues; the sequence is GDEDDDELIDMEMDECPSDEEHELDASH.

The protein belongs to the EMX homeobox family.

It is found in the nucleus. Acts as a homeotic selector gene controlling antennal and mandibular segment identity. The polypeptide is Homeotic protein empty spiracles (ems) (Drosophila melanogaster (Fruit fly)).